We begin with the raw amino-acid sequence, 63 residues long: Large ribosomal subunit protein bL28 (63 aa).

Belongs to the bacterial ribosomal protein bL28 family.

In Thermomicrobium roseum (strain ATCC 27502 / DSM 5159 / P-2), this protein is Large ribosomal subunit protein bL28.